The following is a 387-amino-acid chain: F-box only protein 4 (387 aa).

Residues S11, S12, and S48 each carry the phosphoserine modification. An F-box domain is found at 56 to 102 (ASSLTRLPIDVQLYILSFLSPHDLCQLGSTSRYWNETVRDPILWRYF).

As to quaternary structure, homodimer. Part of the SCF (SKP1-CUL1-F-box) E3 ubiquitin-protein ligase complex SCF(FBXO4) formed of CUL1, SKP1, RBX1 and FBXO4. Interacts with TERF1; this interaction is prevented in the presence of GNL3L. Identified in a complex with CRYAB and CCND1. Phosphorylation at Ser-11 varies during the cell cycle. It is low in resting cells and high in the S phase and the G2/M phase of the cell cycle. Phosphorylation is decreased during late G1 phase. Phosphorylation at Ser-11 promotes homodimerization and is necessary for optimal ubiquitin ligase activity towards CCND1.

It localises to the cytoplasm. It participates in protein modification; protein ubiquitination. Its function is as follows. Substrate recognition component of a SCF (SKP1-CUL1-F-box protein) E3 ubiquitin-protein ligase complex that mediates the ubiquitination and subsequent proteasomal degradation of target proteins. Promotes ubiquitination of cyclin-D1 (CCND1) and its subsequent proteasomal degradation. However, it does not act as a major regulator of CCND1 stability during the G1/S transition. Recognizes TERF1 and promotes its ubiquitination together with UBE2D1. Promotes ubiquitination of FXR1 following phosphorylation of FXR1 by GSK3B, leading to FXR1 degradation by the proteasome. The chain is F-box only protein 4 (FBXO4) from Bos taurus (Bovine).